We begin with the raw amino-acid sequence, 189 residues long: MKELKIIVINNYGQFCHLIHRTVRDLDMDTKIVANTTSVEDILDEEPDGIILSGGPSMERVGSCQEYVESIDIPILGICLGHQLIAQTFGGHTGAGKLGGYAAIDVEVIEEDDILKGLGPRTSVWASHADEVTVLPDEFIHLARSDVCEIEAMRHEERPIYGVQWHPEVAHTDKGEELFMNFFKVCEDY.

Residues 5–189 (KIIVINNYGQ…MNFFKVCEDY (185 aa)) enclose the Glutamine amidotransferase type-1 domain. Cys79 acts as the Nucleophile in catalysis. Catalysis depends on residues His166 and Glu168.

As to quaternary structure, heterodimer composed of a glutamine amidotransferase subunit (A) and a GMP-binding subunit (B).

The catalysed reaction is XMP + L-glutamine + ATP + H2O = GMP + L-glutamate + AMP + diphosphate + 2 H(+). Its pathway is purine metabolism; GMP biosynthesis; GMP from XMP (L-Gln route): step 1/1. Functionally, catalyzes the synthesis of GMP from XMP. The chain is GMP synthase [glutamine-hydrolyzing] subunit A from Methanococcoides burtonii (strain DSM 6242 / NBRC 107633 / OCM 468 / ACE-M).